Consider the following 89-residue polypeptide: Ixosin-B (89 aa).

The N-terminal stretch at 1–26 (MASGWTHRLLLLAAVVTLGATPIAAA) is a signal peptide. Residues 27-57 (SMEYLVTAPGYLTPNADIKITAVVTNPSSAG) constitute a propeptide that is removed on maturation. The disordered stretch occupies residues 68-89 (SGIQPEQHSSGKSDVRRWRSRY). A compositionally biased stretch (basic and acidic residues) spans 76-89 (SSGKSDVRRWRSRY).

In terms of biological role, has antifungal activity against C.albicans. Has antibacterial activity against the Gram-positive bacterium S.aureus and the Gram-negative bacterium E.coli. Lacks hemolytic activity against rabbit erythrocytes. The chain is Ixosin-B from Ixodes sinensis (Hard tick).